Here is a 358-residue protein sequence, read N- to C-terminus: Trace amine-associated receptor 7d (358 aa).

At 1–47 (MRVDDDRFPWDQDSILSRDLLSASSLQLCYENLNRSCVRSPYSPGPR) the chain is on the extracellular side. Residue Asn-34 is glycosylated (N-linked (GlcNAc...) asparagine). 2 disulfide bridges follow: Cys-37-Cys-201 and Cys-120-Cys-205. The helical transmembrane segment at 48 to 68 (LILYAVFGFGAVLAVCGNLMV) threads the bilayer. The Cytoplasmic portion of the chain corresponds to 69-83 (MTSILHFRQLHSPAN). Residues 84–104 (FLVASLACADFLVGLTVMPFS) form a helical membrane-spanning segment. The Extracellular portion of the chain corresponds to 105-122 (MVRSVEGCWYFGDTYCKL). Residues 123-143 (HTCFDVSFCYCSLFHLCFISV) traverse the membrane as a helical segment. Topologically, residues 144–166 (DRYIAVSDPLIYPTRFTASVSGK) are cytoplasmic. Residues 167–187 (CITFSWLLSIIYGFPLIYTGA) traverse the membrane as a helical segment. The Extracellular portion of the chain corresponds to 188–212 (SEAGLEDLVSALTCVGGCQIPMNQK). Residues 213–233 (FVLINFLLFLVPTLVMMTVYS) traverse the membrane as a helical segment. Residues 234–274 (KIFLIARQQAQNIEKMRKQTARASESYKDRVCKRERKAAKT) lie on the Cytoplasmic side of the membrane. The helical transmembrane segment at 275–295 (LGIAVAAFLLSWLPYFIDSII) threads the bilayer. Topologically, residues 296–309 (DAFLGFITPTYVYE) are extracellular. A helical membrane pass occupies residues 310 to 333 (ILIWIVYYNSSMNPLIYAFFYPWF). At 334–358 (RKATKLIVTGKILRENSSTINLFPE) the chain is on the cytoplasmic side.

The protein belongs to the G-protein coupled receptor 1 family.

It localises to the cell membrane. Functionally, olfactory receptor specific for N,N-dimethylalkylamines trace amines, such as N,N-dimethylcyclohexylamine. Trace amine compounds are enriched in animal body fluids and act on trace amine-associated receptors (TAARs) to elicit both intraspecific and interspecific innate behaviors. Ligand-binding causes a conformation change that triggers signaling via G(s)-class of G alpha proteins (GNAL or GNAS). The protein is Trace amine-associated receptor 7d of Rattus norvegicus (Rat).